The primary structure comprises 130 residues: UPF0251 protein MmarC7_1642 (130 aa).

It belongs to the UPF0251 family.

The polypeptide is UPF0251 protein MmarC7_1642 (Methanococcus maripaludis (strain C7 / ATCC BAA-1331)).